The following is a 66-amino-acid chain: Cold shock protein CspC (66 aa).

Residues 4 to 63 (GTVKWFNAEKGFGFIERENGDDVFVHFSAIQSDGFKSLDEGQKVSFDVEQGARGAQAANV) enclose the CSD domain.

Its subcellular location is the cytoplasm. In Bacillus subtilis (strain 168), this protein is Cold shock protein CspC (cspC).